A 678-amino-acid polypeptide reads, in one-letter code: Protein CASP (678 aa).

Over 1-619 (MAANVGSMFQ…LVLSNKMART (619 aa)) the chain is Cytoplasmic. 2 coiled-coil regions span residues 67–450 (LLKS…QDLS) and 502–556 (LSII…FLQS). Ser586 is subject to Phosphoserine. A helical; Anchor for type IV membrane protein transmembrane segment spans residues 620 to 640 (IGFFYTLFLHCLVFLVLYKLA). Topologically, residues 641–678 (WSESMERDCATFCAKKFADHLHKFHENDNGAAAGDLWQ) are lumenal.

This sequence belongs to the CASP family. As to quaternary structure, homodimer; disulfide-linked. Interacts with GOLGA5.

The protein resides in the golgi apparatus membrane. Its function is as follows. May be involved in intra-Golgi retrograde transport. The protein is Protein CASP (CUTL1) of Pongo abelii (Sumatran orangutan).